The following is a 235-amino-acid chain: Octanoyltransferase (235 aa).

A BPL/LPL catalytic domain is found at 37–220 (AGGPDTLLLL…AVNDALDGWL (184 aa)). Residues 78–85 (RGGKITWH), 150–152 (AIG), and 163–165 (GFA) contribute to the substrate site. Cysteine 181 serves as the catalytic Acyl-thioester intermediate.

The protein belongs to the LipB family.

It is found in the cytoplasm. It catalyses the reaction octanoyl-[ACP] + L-lysyl-[protein] = N(6)-octanoyl-L-lysyl-[protein] + holo-[ACP] + H(+). The protein operates within protein modification; protein lipoylation via endogenous pathway; protein N(6)-(lipoyl)lysine from octanoyl-[acyl-carrier-protein]: step 1/2. Its function is as follows. Catalyzes the transfer of endogenously produced octanoic acid from octanoyl-acyl-carrier-protein onto the lipoyl domains of lipoate-dependent enzymes. Lipoyl-ACP can also act as a substrate although octanoyl-ACP is likely to be the physiological substrate. This Mycobacterium leprae (strain Br4923) protein is Octanoyltransferase.